The following is a 319-amino-acid chain: Acetyl-coenzyme A carboxylase carboxyl transferase subunit alpha (319 aa).

The CoA carboxyltransferase C-terminal domain maps to 35 to 296; sequence NLDEEVQRLR…KAQLLADLAD (262 aa).

Belongs to the AccA family. Acetyl-CoA carboxylase is a heterohexamer composed of biotin carboxyl carrier protein (AccB), biotin carboxylase (AccC) and two subunits each of ACCase subunit alpha (AccA) and ACCase subunit beta (AccD).

It localises to the cytoplasm. It catalyses the reaction N(6)-carboxybiotinyl-L-lysyl-[protein] + acetyl-CoA = N(6)-biotinyl-L-lysyl-[protein] + malonyl-CoA. The protein operates within lipid metabolism; malonyl-CoA biosynthesis; malonyl-CoA from acetyl-CoA: step 1/1. In terms of biological role, component of the acetyl coenzyme A carboxylase (ACC) complex. First, biotin carboxylase catalyzes the carboxylation of biotin on its carrier protein (BCCP) and then the CO(2) group is transferred by the carboxyltransferase to acetyl-CoA to form malonyl-CoA. This chain is Acetyl-coenzyme A carboxylase carboxyl transferase subunit alpha, found in Erwinia tasmaniensis (strain DSM 17950 / CFBP 7177 / CIP 109463 / NCPPB 4357 / Et1/99).